Consider the following 127-residue polypeptide: Modulator protein MzrA (127 aa).

Residues 1–10 (MQIPRMSLRQ) lie on the Cytoplasmic side of the membrane. The chain crosses the membrane as a helical span at residues 11 to 31 (LAWSGAVLLLVGTLLLAWSAV). At 32–127 (RQQESTLAIR…RLRDNSHRFG (96 aa)) the chain is on the periplasmic side.

The protein belongs to the MzrA family. In terms of assembly, interacts with EnvZ.

It localises to the cell inner membrane. Functionally, modulates the activity of the EnvZ/OmpR two-component regulatory system, probably by directly modulating EnvZ enzymatic activity and increasing stability of phosphorylated OmpR. Links the two-component systems CpxA/CpxR and EnvZ/OmpR. The sequence is that of Modulator protein MzrA from Escherichia coli (strain K12).